Here is a 406-residue protein sequence, read N- to C-terminus: Argininosuccinate synthase (406 aa).

9-17 (AYSGGLDTS) lines the ATP pocket. Tyr-86 provides a ligand contact to L-citrulline. Gly-116 lines the ATP pocket. Thr-118, Asn-122, and Asp-123 together coordinate L-aspartate. Asn-122 contributes to the L-citrulline binding site. L-citrulline contacts are provided by Arg-126, Ser-174, Ser-183, Glu-259, and Tyr-271.

It belongs to the argininosuccinate synthase family. Type 1 subfamily. As to quaternary structure, homotetramer.

It is found in the cytoplasm. The enzyme catalyses L-citrulline + L-aspartate + ATP = 2-(N(omega)-L-arginino)succinate + AMP + diphosphate + H(+). It functions in the pathway amino-acid biosynthesis; L-arginine biosynthesis; L-arginine from L-ornithine and carbamoyl phosphate: step 2/3. The sequence is that of Argininosuccinate synthase from Geobacillus thermodenitrificans (strain NG80-2).